Reading from the N-terminus, the 59-residue chain is Antibacterial peptide enbocin (59 aa).

The N-terminal stretch at 1 to 20 is a signal peptide; the sequence is MNFTRIIFFLFVVVFATASG. A propeptide is located at residue K21. Position 58 is a serine amide (S58).

This sequence belongs to the cecropin family.

Its subcellular location is the secreted. Its function is as follows. Has antibacterial activity against Gram-positive and Gram-negative bacteria. This Bombyx mori (Silk moth) protein is Antibacterial peptide enbocin.